Here is a 460-residue protein sequence, read N- to C-terminus: Bifunctional beta-D-glucosidase/beta-D-fucosidase (460 aa).

The active-site Proton donor is glutamate 168. Glutamate 362 (nucleophile) is an active-site residue.

The protein belongs to the glycosyl hydrolase 1 family. Monomer.

It is found in the secreted. The enzyme catalyses Hydrolysis of terminal, non-reducing beta-D-glucosyl residues with release of beta-D-glucose.. It catalyses the reaction Hydrolysis of terminal non-reducing beta-D-fucose residues in beta-D-fucosides.. Its activity is regulated as follows. Inhibited by Cu(2+), Ag(+) and Hg(+), but not by other cations such as Mg(2+), Ca(2+), Mn(2+) and Co(2+). Inhibited by 1-amino-1-deoxy-D-glucose and p-chloromercuribenzoic acid, but not by EDTA or dithiothreitol. Inhibited by the disaccharides sucrose, lactose and cellobiose. The monosaccharides D-fructose, D-mannose, D-xylose and D-glucose increase the beta-D-fucosidase activity, but not the beta-D-glucosidase activity. D-glucose inhibits the beta-D-glucosidase activity, but promotes the beta-D-fucosidase activity. D-fucose inhibits the beta-D-glucosidase activity and does not significantly affect the beta-D-fucosidase activity. Bifunctional beta-D-glucosidase/beta-D-fucosidase. Activity towards pNP-beta-D-fucoside is about 80-85% of the activity towards pNP-beta-D-glucoside. Also has slight activity (less than 10%) towards pNP-beta-D-galactoside, and very low activity (less than 1%) towards pNP-beta-D-xyloside. Hydrolyzes laminaribiose, sophorose, cellobiose and gentobiose. Not active against maltose, pNP-alpha-D-glucoside or pNP-beta-L-fucoside. This Bifidobacterium breve protein is Bifunctional beta-D-glucosidase/beta-D-fucosidase.